Reading from the N-terminus, the 1461-residue chain is MASKMPEGSPPTSRSIQSRNSSYSTSSNERIGTPSTISLSENSDLSKLQSTNDFESREDLSLTSDDNNDPEYVMCYNTVYHQKTKINDKLLSETEQLRKIYPLESRVFPKPTIVKEITNERTKRYTFYDDDAPLTNQHTVLDEATYNRILKRIDFFIEKVVEVPPTYHFLSLLNVQLRIQPIWWMDEFAERNGIESLLSALRNLGHYPERASKTPLESQIIQSLFHCLNSENCRRRYQSSAKCSVPGFNALGTIAETVLSKSLNSARMATFLLKFLCNKKGLSYFKAVIRAFEWLVEQKLSKTRFSAWMHSFNDVITGVRVCADSSPQAIVHMDEFEDTDCLIDYLVATLALIRDLCAAPPDLQLRCALRHELLSAGLQKAIDSLLKWRNRHVRDALQLLIKEHNADARRFRSGSDVNNVDRKCVKKQMNYREESHTPHGNTTRKTSTPVSNNRPTTPEQQAVWDVFQRIYTRFTGSEGSKESFIKLLEYFVTEPDNGKIQKSMQLLTHTLEALEGFKTAKADTNVGLTILSQRLLDKLGTAEEIAEYKTKYNGAMLENKHLKEQVESMLSQLNVGPRDPMQFLKKQLDELKAELNLRDNLLASMQREFETRYRAQIQAYNKLQSQMEHVQNSNEQHLQPGLLNKVSKSFDSVHRRNLSQDSLDAMTEQFSYHVEPNILSGSGIPVRVHTPSKTEDLDESFSGSEISSSPSPLLPDVSDTVEEQQKLLLKSPPPPPPAVIVPTPAPAPIPVPPPAPIMGGPPPPPPPPGVAGAGPPPPPPPPPAVSAGGSRYYAPAPQAEPEPKIDETSLTEEQKIQLEEARKQRKAADDAARAAIEKYTSIPSLRDLHKPTRPLKRVHWQRVDPLPGPNVFTKFCLNFDITAKVFIDNGLLDFLDEKFDNTPREDFVAVEISDQRSSLLPDTVEQNMAIILRSVSNMPVEDLVQKFLVEPDFLPASILYFDRASLASTNAYTDPFIPYSTDYTKKNPKEPTADVNSLSYFEKFFVLFVVNLRHYFQERMKALKFRSTLFGDLEILEVRMKEVIDTSDSIMEDKNFAEFFQVLLIIGNYFNEPYDRASAFSLYMIYRLETLRDSSSALTLMHYFDEIIRTRFPELLQAESTFKKIQSVSGYNIDAMVAGVDGAYDEFCDFQTSLKDGALSKCDQHHPDDKAYDILSEWLPEAKERIRNIKKLKTDMLTKLENTVKYLCEYDSIDKVRNSFFKNLNSFYEMYSIAKAENEERFEKEKRRIMSEDRDKLIRGRQKTSIVAKYRNKRELPEDSDDKQDTASKDKNSLETIDEKMEDASKIEGDAKTGDDNEMEDLDKMEDLEKPDYAEEKDPYITVMSELRSRIQNVPKRTVTVYSDEGVATLEPGAQGDDVVDKAKMILEKMEGHSQLLTSSANPDEEVLRAKLKAAERLQKPAIPRTRRKGHTEPKSAKSLLAELTNGSNASNLVENDRQKQ.

Disordered regions lie at residues 1 to 67 (MASK…SDDN) and 431 to 457 (YREESHTPHGNTTRKTSTPVSNNRPTT). A compositionally biased stretch (low complexity) spans 12 to 28 (TSRSIQSRNSSYSTSSN). Polar residues-rich tracts occupy residues 29–53 (ERIGTPSTISLSENSDLSKLQSTND) and 438–457 (PHGNTTRKTSTPVSNNRPTT). The region spanning 92–508 (SETEQLRKIY…KIQKSMQLLT (417 aa)) is the GBD/FH3 domain. An interaction with tea4 region spans residues 137–515 (QHTVLDEATY…LLTHTLEALE (379 aa)). Residues 540-639 (GTAEEIAEYK…VQNSNEQHLQ (100 aa)) adopt a coiled-coil conformation. Residues 683 to 811 (GIPVRVHTPS…EPKIDETSLT (129 aa)) form a disordered region. Over residues 700 to 718 (SFSGSEISSSPSPLLPDVS) the composition is skewed to low complexity. The segment covering 731 to 784 (SPPPPPPAVIVPTPAPAPIPVPPPAPIMGGPPPPPPPPGVAGAGPPPPPPPPPA) has biased composition (pro residues). Over residues 801-811 (PEPKIDETSLT) the composition is skewed to basic and acidic residues. The FH2 domain maps to 845–1257 (LRDLHKPTRP…RIMSEDRDKL (413 aa)). Disordered regions lie at residues 1268–1337 (AKYR…AEEK) and 1416–1461 (ERLQ…RQKQ). Basic and acidic residues-rich tracts occupy residues 1273 to 1315 (KREL…KTGD) and 1325 to 1337 (MEDLEKPDYAEEK). The span at 1445–1454 (TNGSNASNLV) shows a compositional bias: polar residues.

The protein belongs to the formin homology family. In terms of assembly, interacts with rax2, rho3 and tea4. Interacts with tea1 in the presence of tea4.

The protein resides in the cytoplasm. Its subcellular location is the cell cortex. It localises to the cell tip. Functionally, involved in controlling polarized cell growth. Required for interphase actin cable formation and microtubule organization. This Schizosaccharomyces pombe (strain 972 / ATCC 24843) (Fission yeast) protein is Formin-3 (for3).